The sequence spans 626 residues: Cysteine desulfurase (626 aa).

2 disordered regions span residues 1 to 21 and 41 to 64; these read MTNTVPSVPAVPNLPTQSDPF and AGVSEAESAPTPLSVPTPALPTTS. The tract at residues 1-225 is cargo-loading domain; the sequence is MTNTVPSVPA…AGAVGFDIHQ (225 aa). Residues 226–626 are cysteine desulfurase domain; sequence VRRDFPILQE…RRIQTGSLAL (401 aa). Lysine 444 carries the post-translational modification N6-(pyridoxal phosphate)lysine. Residue cysteine 582 is the Cysteine persulfide intermediate of the active site.

The protein belongs to the class-V pyridoxal-phosphate-dependent aminotransferase family. Csd subfamily. In terms of assembly, there are 1-2 copies of this protein in each type 2A encapsulin shell. The cofactor is pyridoxal 5'-phosphate.

The protein resides in the encapsulin nanocompartment. The catalysed reaction is (sulfur carrier)-H + L-cysteine = (sulfur carrier)-SH + L-alanine. Its activity is regulated as follows. Encapsulated enzyme is 7-fold more active than encapsulated enzyme. In terms of biological role, cargo protein of a type 2A encapsulin nanocompartment probably involved in sulfur metabolism. Cysteine desulfurases mobilize the sulfur from L-cysteine to yield L-alanine, an essential step in sulfur metabolism for biosynthesis of a variety of sulfur-containing biomolecules. This Synechococcus elongatus (strain ATCC 33912 / PCC 7942 / FACHB-805) (Anacystis nidulans R2) protein is Cysteine desulfurase.